The primary structure comprises 280 residues: Ribosomal RNA small subunit methyltransferase A (280 aa).

The S-adenosyl-L-methionine site is built by asparagine 28, leucine 30, glycine 55, glutamate 77, aspartate 103, and asparagine 122.

Belongs to the class I-like SAM-binding methyltransferase superfamily. rRNA adenine N(6)-methyltransferase family. RsmA subfamily.

The protein resides in the cytoplasm. It carries out the reaction adenosine(1518)/adenosine(1519) in 16S rRNA + 4 S-adenosyl-L-methionine = N(6)-dimethyladenosine(1518)/N(6)-dimethyladenosine(1519) in 16S rRNA + 4 S-adenosyl-L-homocysteine + 4 H(+). Specifically dimethylates two adjacent adenosines (A1518 and A1519) in the loop of a conserved hairpin near the 3'-end of 16S rRNA in the 30S particle. May play a critical role in biogenesis of 30S subunits. The protein is Ribosomal RNA small subunit methyltransferase A of Ruegeria sp. (strain TM1040) (Silicibacter sp.).